Consider the following 456-residue polypeptide: MGNSRSRVGRSFCSQFLPEEQAEIDQLFDALSSDKNSPNVSSKSFSLKALQNHVGEALPPEMVTRLYDGMRRVDLTGKAKGPSENVSQEQFTASMSHLLKGNSEEKSLMIMKMISATEGPVKAREVQKFTEDLVGSVVHVLSHRQELRGWTGKEAPGPNPRVQVLAAQLLSDMKLQDGKRLLGPQWLDYDCDRAVIEDWVFRVPHVAIFLSVVICKGFLILCSSLDLTTLVPERQVDQGRGFESILDVLSVMYINAQLPREQRHRWCLLFSSELHGHSFSQLCGHITHRGPCVAVLEDHDKHVFGGFASCSWEVKPQFQGDNRCFLFSICPSMAVYTHTGYNDHYMYLNHGQQTIPNGLGMGGQHNYFGLWVDVDFGKGHSRAKPTCTTYNSPQLSAQENFQFDKMEVWAVGDPSEEQLAKGNKSILDADPEAQALLEISGHSRHSEGLREVPDDE.

A lipid anchor (N-myristoyl glycine) is attached at glycine 2. One can recognise a TLDc domain in the interval 244-412 (SILDVLSVMY…FDKMEVWAVG (169 aa)).

As to quaternary structure, interacts (via C-terminal domain) with MTOR and MLST8; the interaction with MTOR increases upon nutrient stimulation.

The protein resides in the membrane. It is found in the cytoplasm. It localises to the lysosome. Activates an alternative mTOR signaling through RPS6KB2 activation and EIF4EBP1 repression to regulate cell proliferation and migration. Recruits MTOR at the lysosome, essential for MTOR signaling at the lysosome. The polypeptide is MTOR-associated protein MEAK7 (Homo sapiens (Human)).